The sequence spans 442 residues: MSYHNPYTPPRKSATFDDYTLAEIRRAAATGIYDIRGAGTKRKVPHFDDLLFLGASISRYPLEGYREKCDTSVVLGTRFAKKPIHLKIPITIAGMSFGALSGPAKEALGRGATASGTSTTTGDGGMTDEERGHSQTLVYQYLPSRYGMNPKDLRRADAIEVVVGQGAKPGGGGMLLGQKISDRVANMRNLPKGIDQRSACRHPDWTGPDDLEIKILELREITDWEKPIYVKVGGARPYYDTALAVKAGADVVVLDGMQGGTAATQDVFIENVGMPTLACIRPAVQALQDLGMHRKVQLVVSGGIRSGADVAKALALGADAVAIGTAALVAIGDNDPHWEEEYQKLGTTAGAYDDWHEGKDPAGITTQDPELMKRLDPVAAGRRLANYLKVMTLEAQTIARACGKNHLHNLEPEDLCALTMEAAAMAQVPLAGTSWYPGKGTF.

The interval 108–133 (LGRGATASGTSTTTGDGGMTDEERGH) is disordered. The segment covering 109 to 121 (GRGATASGTSTTT) has biased composition (low complexity).

Belongs to the glutamate synthase family.

This chain is Glutamate synthase large subunit-like protein (glxD), found in Rhizobium meliloti (strain 1021) (Ensifer meliloti).